Here is a 203-residue protein sequence, read N- to C-terminus: Protein-methionine-sulfoxide reductase heme-binding subunit MsrQ (203 aa).

5 consecutive transmembrane segments (helical) span residues Ile13–Gly33, Leu79–Glu99, Pro116–Thr136, Trp147–Trp167, and Val169–Leu189.

Belongs to the MsrQ family. As to quaternary structure, heterodimer of a catalytic subunit (MsrP) and a heme-binding subunit (MsrQ). FMN serves as cofactor. The cofactor is heme b.

Its subcellular location is the cell inner membrane. Functionally, part of the MsrPQ system that repairs oxidized periplasmic proteins containing methionine sulfoxide residues (Met-O), using respiratory chain electrons. Thus protects these proteins from oxidative-stress damage caused by reactive species of oxygen and chlorine generated by the host defense mechanisms. MsrPQ is essential for the maintenance of envelope integrity under bleach stress, rescuing a wide series of structurally unrelated periplasmic proteins from methionine oxidation. MsrQ provides electrons for reduction to the reductase catalytic subunit MsrP, using the quinone pool of the respiratory chain. The chain is Protein-methionine-sulfoxide reductase heme-binding subunit MsrQ from Yersinia pseudotuberculosis serotype O:1b (strain IP 31758).